The sequence spans 799 residues: ATP synthase subunit alpha (799 aa).

Residues 1-549 form an ATP synthase alpha chain region; the sequence is MTDNKNHSLI…EEVSLKPTTE (549 aa). 170 to 177 contributes to the ATP binding site; that stretch reads GDRQTGKT. A unknown region spans residues 550–799; it reads TSEAVQIEEK…KGPSGFTYLK (250 aa).

The protein belongs to the ATPase alpha/beta chains family. In terms of assembly, F-type ATPases have 2 components, CF(1) - the catalytic core - and CF(0) - the membrane proton channel. CF(1) has five subunits: alpha(3), beta(3), gamma(1), delta(1), epsilon(1). CF(0) has three main subunits: a(1), b(2) and c(9-12). The alpha and beta chains form an alternating ring which encloses part of the gamma chain. CF(1) is attached to CF(0) by a central stalk formed by the gamma and epsilon chains, while a peripheral stalk is formed by the delta and b chains.

It localises to the cell membrane. The catalysed reaction is ATP + H2O + 4 H(+)(in) = ADP + phosphate + 5 H(+)(out). Functionally, produces ATP from ADP in the presence of a proton gradient across the membrane. The alpha chain is a regulatory subunit. This is ATP synthase subunit alpha (atpA) from Ureaplasma parvum serovar 3 (strain ATCC 27815 / 27 / NCTC 11736).